The primary structure comprises 700 residues: Choline transporter-like protein 5-B (700 aa).

The Cytoplasmic portion of the chain corresponds to glycine 1 to aspartate 4. A helical transmembrane segment spans residues valine 5–alanine 25. Topologically, residues tryptophan 26–tryptophan 209 are extracellular. 2 N-linked (GlcNAc...) asparagine glycosylation sites follow: asparagine 157 and asparagine 164. Residues phenylalanine 210–leucine 230 traverse the membrane as a helical segment. Over arginine 231–threonine 233 the chain is Cytoplasmic. The chain crosses the membrane as a helical span at residues alanine 234–tryptophan 254. Over histidine 255 to tryptophan 292 the chain is Extracellular. Residues leucine 293–leucine 313 form a helical membrane-spanning segment. Residues arginine 314 to proline 341 are Cytoplasmic-facing. Residues isoleucine 342 to leucine 362 traverse the membrane as a helical segment. The Extracellular portion of the chain corresponds to alanine 363–leucine 432. Asparagine 383 and asparagine 395 each carry an N-linked (GlcNAc...) asparagine glycan. Residues tryptophan 433 to tryptophan 455 form a helical membrane-spanning segment. The Cytoplasmic segment spans residues alanine 456–serine 482. Residues leucine 483–leucine 503 form a helical membrane-spanning segment. The Extracellular segment spans residues aspartate 504–tyrosine 541. The chain crosses the membrane as a helical span at residues isoleucine 542–leucine 562. At methionine 563 to aspartate 577 the chain is on the cytoplasmic side. Residues phenylalanine 578–phenylalanine 598 form a helical membrane-spanning segment. At phenylalanine 599–tyrosine 616 the chain is on the extracellular side. Residues tryptophan 617–valine 637 traverse the membrane as a helical segment. At tyrosine 638–arginine 687 the chain is on the cytoplasmic side. Residues lysine 676–histidine 700 form a disordered region. Residues lysine 677–lysine 692 show a composition bias toward basic residues.

The protein belongs to the CTL (choline transporter-like) family.

Its subcellular location is the cell membrane. It catalyses the reaction choline(out) + n H(+)(in) = choline(in) + n H(+)(out). Its function is as follows. Choline/H+ antiporter. This chain is Choline transporter-like protein 5-B (slc44a5b), found in Danio rerio (Zebrafish).